The primary structure comprises 928 residues: DNA polymerase I (928 aa).

Positions 1-323 constitute a 5'-3' exonuclease domain; it reads MVQIPQNPLI…ADEAPEVTAT (323 aa). The 3'-5' exonuclease domain occupies 324 to 517; sequence VISYDNYVTI…LHLKMWPDLQ (194 aa). The interval 324–928 is klenow fragment; the sequence is VISYDNYVTI…GSGENWDQAH (605 aa). Residues 521 to 928 form a polymerase region; that stretch reads GPLNVFENIE…GSGENWDQAH (408 aa).

Belongs to the DNA polymerase type-A family. As to quaternary structure, single-chain monomer with multiple functions.

It carries out the reaction DNA(n) + a 2'-deoxyribonucleoside 5'-triphosphate = DNA(n+1) + diphosphate. Functionally, in addition to polymerase activity, this DNA polymerase exhibits 3'-5' and 5'-3' exonuclease activity. It is able to utilize nicked circular duplex DNA as a template and can unwind the parental DNA strand from its template. In terms of biological role, genetic interactions among priB, dam, lexA, nagC, polA, rdgB, rdgB, rep and uup link the PriA-PriB replication restart pathway to DNA double-strand break repair. This is DNA polymerase I (polA) from Escherichia coli (strain K12).